The following is a 93-amino-acid chain: Small integral membrane protein 36 (93 aa).

A helical transmembrane segment spans residues 14 to 34; the sequence is LIILVASYVILLLVFLVSCVL. The segment at 70 to 93 is disordered; it reads SHWARGPSLHLKDPAPLGKKSTVV.

The protein localises to the membrane. The chain is Small integral membrane protein 36 from Mus musculus (Mouse).